A 603-amino-acid chain; its full sequence is Ribosome-inactivating protein PMRIPt (603 aa).

Residues 1 to 39 (MRVVAGILYIVVMAICGLGIQGGTLQDYPSVYFQDSTLQ) form the signal peptide. N-linked (GlcNAc...) asparagine glycans are attached at residues Asn-74 and Asn-168. Glu-208 is a catalytic residue. 3 disulfides stabilise this stretch: Cys-297–Cys-335, Cys-351–Cys-370, and Cys-392–Cys-409. Ricin B-type lectin domains are found at residues 338–466 (GEPT…VGDD) and 467–593 (VEPI…WMTM). One copy of the 1-alpha repeat lies at 348 to 388 (DGLCMDVRNESNNDGIPIQLWPCGAQRNQQWTFHTDGTIQS). Residues Asn-356 and Asn-408 are each glycosylated (N-linked (GlcNAc...) asparagine). One copy of the 1-beta repeat lies at 389-430 (MGKCMTSNGYHPGDYVMIFNCSTAPVPDATKWVVSIDGSITN). One copy of the 1-gamma repeat lies at 433–466 (SGLVLTAPQAAQTTILLVVRNTHSAKQGRSVGDD). One copy of the 2-alpha repeat lies at 478 to 516 (KYMCLQGNNENNTRVWLEDCAVDRPQQWWALYSDGTIRV). Intrachain disulfides connect Cys-481/Cys-497 and Cys-523/Cys-540. A glycan (N-linked (GlcNAc...) asparagine) is linked at Asn-488. One copy of the 2-beta repeat lies at 520–558 (RSLCVTSDGHSSRDAIIILTCDGGINQRLVFNTDGTILN). The 2-gamma repeat unit spans residues 561-597 (AQLVMDVRQSNVALRQIILYQPTGNPNQQWMTMITRT).

The protein belongs to the ribosome-inactivating protein family. Type 2 RIP subfamily. Tetramer of four pairs of disulfide bound A-B chains. The precursor is processed in two chains, A and B, that are linked by a disulfide bond. In terms of processing, glycosylated. As to expression, expressed in rhizome and more abundantly in leaves (at protein level).

It catalyses the reaction Endohydrolysis of the N-glycosidic bond at one specific adenosine on the 28S rRNA.. Strongly inhibited by asialofetuin and asialomucin. In terms of biological role, galNAc-specific agglutinin. Behaves as a type-2 ribosome-inactivating protein. Inhibits mammalian ribosomes. The A chain is responsible for inhibiting protein synthesis through the catalytic inactivation of 60S ribosomal subunits by removing adenine from position 4,324 of 28S rRNA. The B chain binds to cell receptors and probably facilitates the entry into the cell of the A chain; B chains are also responsible for cell agglutination (lectin activity). Involved in plant defense against insects. Has very low cytotoxic activity against the human tumor cell lines CEM and Molt4. The polypeptide is Ribosome-inactivating protein PMRIPt (Polygonatum multiflorum (Solomon's seal)).